Consider the following 254-residue polypeptide: 3-deoxy-manno-octulosonate cytidylyltransferase (254 aa).

This sequence belongs to the KdsB family.

It is found in the cytoplasm. It carries out the reaction 3-deoxy-alpha-D-manno-oct-2-ulosonate + CTP = CMP-3-deoxy-beta-D-manno-octulosonate + diphosphate. It participates in nucleotide-sugar biosynthesis; CMP-3-deoxy-D-manno-octulosonate biosynthesis; CMP-3-deoxy-D-manno-octulosonate from 3-deoxy-D-manno-octulosonate and CTP: step 1/1. Its pathway is bacterial outer membrane biogenesis; lipopolysaccharide biosynthesis. Activates KDO (a required 8-carbon sugar) for incorporation into bacterial lipopolysaccharide in Gram-negative bacteria. This is 3-deoxy-manno-octulosonate cytidylyltransferase from Nitrobacter winogradskyi (strain ATCC 25391 / DSM 10237 / CIP 104748 / NCIMB 11846 / Nb-255).